A 343-amino-acid polypeptide reads, in one-letter code: UDP-N-acetylglucosamine--N-acetylmuramyl-(pentapeptide) pyrophosphoryl-undecaprenol N-acetylglucosamine transferase (343 aa).

UDP-N-acetyl-alpha-D-glucosamine is bound by residues 10-12 (TGG), N113, S174, and Q275.

Belongs to the glycosyltransferase 28 family. MurG subfamily.

The protein resides in the cell membrane. The catalysed reaction is di-trans,octa-cis-undecaprenyl diphospho-N-acetyl-alpha-D-muramoyl-L-alanyl-D-glutamyl-meso-2,6-diaminopimeloyl-D-alanyl-D-alanine + UDP-N-acetyl-alpha-D-glucosamine = di-trans,octa-cis-undecaprenyl diphospho-[N-acetyl-alpha-D-glucosaminyl-(1-&gt;4)]-N-acetyl-alpha-D-muramoyl-L-alanyl-D-glutamyl-meso-2,6-diaminopimeloyl-D-alanyl-D-alanine + UDP + H(+). The protein operates within cell wall biogenesis; peptidoglycan biosynthesis. Cell wall formation. Catalyzes the transfer of a GlcNAc subunit on undecaprenyl-pyrophosphoryl-MurNAc-pentapeptide (lipid intermediate I) to form undecaprenyl-pyrophosphoryl-MurNAc-(pentapeptide)GlcNAc (lipid intermediate II). The sequence is that of UDP-N-acetylglucosamine--N-acetylmuramyl-(pentapeptide) pyrophosphoryl-undecaprenol N-acetylglucosamine transferase from Wolbachia sp. subsp. Brugia malayi (strain TRS).